The chain runs to 394 residues: Seipin (394 aa).

At Met1–Leu27 the chain is on the cytoplasmic side. Residues Leu28–Leu48 traverse the membrane as a helical segment. The Lumenal segment spans residues Tyr49 to Asn242. N-linked (GlcNAc...) asparagine glycosylation is found at Asn88 and Asn242. Residues Phe243–Trp263 traverse the membrane as a helical segment. The Cytoplasmic portion of the chain corresponds to Pro264–Ser394. Residues Arg281–Ser394 are disordered. At Ser289 the chain carries Phosphoserine. Residues Gln292 to Gln303 show a composition bias toward low complexity. Residues Ser346 and Ser351 each carry the phosphoserine modification.

It belongs to the seipin family. In terms of assembly, undecamer (an oligomer having eleven subunits). Oligomerization is important for its function in lipid droplet formation. Interacts with LDAF1 to form an oligomeric complex. Interacts with RAB18. Interacts with ZFYVE1 in a RAB18-dependent manner.

The protein resides in the endoplasmic reticulum membrane. It localises to the lipid droplet. In terms of biological role, plays a crucial role in the formation of lipid droplets (LDs) which are storage organelles at the center of lipid and energy homeostasis. In association with LDAF1, defines the sites of LD formation in the ER. Also required for growth and maturation of small nascent LDs into larger mature LDs. Mediates the formation and/or stabilization of endoplasmic reticulum-lipid droplets (ER-LD) contacts, facilitating protein and lipid delivery from the ER into growing LDs. Regulates the maturation of ZFYVE1-positive nascent LDs and the function of the RAB18-ZFYVE1 complex in mediating the formation of ER-LD contacts. Binds anionic phospholipids including phosphatidic acid. Plays an important role in the differentiation and development of adipocytes. This chain is Seipin, found in Bos taurus (Bovine).